The chain runs to 443 residues: Mitochondrial distribution and morphology protein 10 (443 aa).

Belongs to the MDM10 family. Component of the ER-mitochondria encounter structure (ERMES) or MDM complex, composed of MMM1, MDM10, MDM12 and MDM34. Associates with the mitochondrial outer membrane sorting assembly machinery SAM(core) complex.

It localises to the mitochondrion outer membrane. Functionally, component of the ERMES/MDM complex, which serves as a molecular tether to connect the endoplasmic reticulum and mitochondria. Components of this complex are involved in the control of mitochondrial shape and protein biogenesis and may function in phospholipid exchange. MDM10 is involved in the late assembly steps of the general translocase of the mitochondrial outer membrane (TOM complex). Functions in the TOM40-specific route of the assembly of outer membrane beta-barrel proteins, including the association of TOM40 with the receptor TOM22 and small TOM proteins. Can associate with the SAM(core) complex as well as the MDM12-MMM1 complex, both involved in late steps of the major beta-barrel assembly pathway, that is responsible for biogenesis of all outer membrane beta-barrel proteins. May act as a switch that shuttles between both complexes and channels precursor proteins into the TOM40-specific pathway. Plays a role in mitochondrial morphology and in the inheritance of mitochondria. The polypeptide is Mitochondrial distribution and morphology protein 10 (Pyricularia oryzae (strain 70-15 / ATCC MYA-4617 / FGSC 8958) (Rice blast fungus)).